The sequence spans 56 residues: uncharacterized protein (56 aa).

The span at 21 to 38 (HTHTPHPHHTHTHTHHTP) shows a compositional bias: basic residues. The tract at residues 21-40 (HTHTPHPHHTHTHTHHTPTH) is disordered.

This is an uncharacterized protein from Saccharomyces cerevisiae (strain ATCC 204508 / S288c) (Baker's yeast).